Reading from the N-terminus, the 167-residue chain is SsrA-binding protein (167 aa).

Positions 139–158 (QNHDKRDAAKERDWQRDKQR) are enriched in basic and acidic residues. Residues 139 to 167 (QNHDKRDAAKERDWQRDKQRVMRRHNRDA) are disordered.

Belongs to the SmpB family.

Its subcellular location is the cytoplasm. Required for rescue of stalled ribosomes mediated by trans-translation. Binds to transfer-messenger RNA (tmRNA), required for stable association of tmRNA with ribosomes. tmRNA and SmpB together mimic tRNA shape, replacing the anticodon stem-loop with SmpB. tmRNA is encoded by the ssrA gene; the 2 termini fold to resemble tRNA(Ala) and it encodes a 'tag peptide', a short internal open reading frame. During trans-translation Ala-aminoacylated tmRNA acts like a tRNA, entering the A-site of stalled ribosomes, displacing the stalled mRNA. The ribosome then switches to translate the ORF on the tmRNA; the nascent peptide is terminated with the 'tag peptide' encoded by the tmRNA and targeted for degradation. The ribosome is freed to recommence translation, which seems to be the essential function of trans-translation. The sequence is that of SsrA-binding protein from Xanthomonas oryzae pv. oryzae (strain MAFF 311018).